The chain runs to 459 residues: tRNA modification GTPase MnmE (459 aa).

(6S)-5-formyl-5,6,7,8-tetrahydrofolate contacts are provided by Arg-21, Glu-84, and Lys-123. One can recognise a TrmE-type G domain in the interval 219–380; that stretch reads GMLTVIVGQP…LEKEIKQRVY (162 aa). Residue Asn-229 coordinates K(+). GTP is bound by residues 229–234, 248–254, and 273–276; these read NVGKSS, TDIPGTT, and DTAG. Mg(2+) is bound at residue Ser-233. Residues Thr-248, Ile-250, and Thr-253 each coordinate K(+). Thr-254 contacts Mg(2+). Lys-459 contributes to the (6S)-5-formyl-5,6,7,8-tetrahydrofolate binding site.

It belongs to the TRAFAC class TrmE-Era-EngA-EngB-Septin-like GTPase superfamily. TrmE GTPase family. Homodimer. Heterotetramer of two MnmE and two MnmG subunits. It depends on K(+) as a cofactor.

Its subcellular location is the cytoplasm. Its function is as follows. Exhibits a very high intrinsic GTPase hydrolysis rate. Involved in the addition of a carboxymethylaminomethyl (cmnm) group at the wobble position (U34) of certain tRNAs, forming tRNA-cmnm(5)s(2)U34. The protein is tRNA modification GTPase MnmE of Desulfitobacterium hafniense (strain Y51).